Reading from the N-terminus, the 668-residue chain is Endoplasmic reticulum membrane-associated RNA degradation protein (668 aa).

The next 2 helical transmembrane spans lie at 378 to 398 (LLAF…LSVF) and 575 to 595 (VLSL…AVCG).

Its subcellular location is the endoplasmic reticulum membrane. In terms of biological role, may play a role in neuronal migration during embryonic development. This is Endoplasmic reticulum membrane-associated RNA degradation protein (ERMARD) from Macaca fascicularis (Crab-eating macaque).